The primary structure comprises 454 residues: uncharacterized protein (454 aa).

An HNH domain is found at 364 to 405 (CSRPGCDAPAYHSEVHHVTPWTTTHRTDINDLTLACGPDNRL). The disordered stretch occupies residues 415-434 (NAKGDTEWLPPAHLDHGQPR).

The protein belongs to the Rv1128c/1148c/1588c/1702c/1945/3466 family.

This is an uncharacterized protein from Mycobacterium tuberculosis (strain CDC 1551 / Oshkosh).